We begin with the raw amino-acid sequence, 258 residues long: Ribosomal RNA small subunit methyltransferase A (258 aa).

S-adenosyl-L-methionine contacts are provided by His13, Leu15, Gly41, Asp63, Asp87, and Asn106.

This sequence belongs to the class I-like SAM-binding methyltransferase superfamily. rRNA adenine N(6)-methyltransferase family. RsmA subfamily.

The protein localises to the cytoplasm. The catalysed reaction is adenosine(1518)/adenosine(1519) in 16S rRNA + 4 S-adenosyl-L-methionine = N(6)-dimethyladenosine(1518)/N(6)-dimethyladenosine(1519) in 16S rRNA + 4 S-adenosyl-L-homocysteine + 4 H(+). Functionally, specifically dimethylates two adjacent adenosines (A1518 and A1519) in the loop of a conserved hairpin near the 3'-end of 16S rRNA in the 30S particle. May play a critical role in biogenesis of 30S subunits. The chain is Ribosomal RNA small subunit methyltransferase A from Cytophaga hutchinsonii (strain ATCC 33406 / DSM 1761 / CIP 103989 / NBRC 15051 / NCIMB 9469 / D465).